The sequence spans 382 residues: Anhydro-N-acetylmuramic acid kinase (382 aa).

Residue 9–16 (GTSLDGID) participates in ATP binding.

It belongs to the anhydro-N-acetylmuramic acid kinase family.

The catalysed reaction is 1,6-anhydro-N-acetyl-beta-muramate + ATP + H2O = N-acetyl-D-muramate 6-phosphate + ADP + H(+). It participates in amino-sugar metabolism; 1,6-anhydro-N-acetylmuramate degradation. It functions in the pathway cell wall biogenesis; peptidoglycan recycling. In terms of biological role, catalyzes the specific phosphorylation of 1,6-anhydro-N-acetylmuramic acid (anhMurNAc) with the simultaneous cleavage of the 1,6-anhydro ring, generating MurNAc-6-P. Is required for the utilization of anhMurNAc either imported from the medium or derived from its own cell wall murein, and thus plays a role in cell wall recycling. This is Anhydro-N-acetylmuramic acid kinase from Bacillus thuringiensis subsp. konkukian (strain 97-27).